The sequence spans 266 residues: Ras-like protein family member 12 (266 aa).

GTP is bound by residues 27–34 (GRRGAGKS), 74–78 (DTADL), and 134–137 (NKLD).

Belongs to the small GTPase superfamily. Ras family.

It catalyses the reaction GTP + H2O = GDP + phosphate + H(+). This Bos taurus (Bovine) protein is Ras-like protein family member 12 (RASL12).